The chain runs to 621 residues: Putative zinc metalloprotease CPn_0344/CP_0416/CPj0344/CpB0350 (621 aa).

Residue histidine 20 participates in Zn(2+) binding. Glutamate 21 is an active-site residue. Residue histidine 24 participates in Zn(2+) binding. Transmembrane regions (helical) follow at residues 103–125 (ILVLVAGPLANILLAVLAFSILY), 561–583 (VLNLLPIPVLDGGYILLCLWEIV), and 596–613 (ILVPFTFLLIIFFIFLTF).

It belongs to the peptidase M50B family. Requires Zn(2+) as cofactor.

It localises to the cell inner membrane. The protein is Putative zinc metalloprotease CPn_0344/CP_0416/CPj0344/CpB0350 of Chlamydia pneumoniae (Chlamydophila pneumoniae).